Here is a 194-residue protein sequence, read N- to C-terminus: MRSASKTRITGETSIELSINLDSQADSTISTGVGFLDHMLTLFSKHSRITLNVKADGDTYVDAHHTVEDVGITLGLCLKEALSDKASINRYGSSYVPMDESLGFCALDLSGRSYLVFDAELTNPKLGDFDTELVEEFFQAVAFNTEMNLHLRVLYGKNTHHKIEALFKAFGRALREAITINPEIKGVNSTKGVL.

It belongs to the imidazoleglycerol-phosphate dehydratase family.

It is found in the cytoplasm. It carries out the reaction D-erythro-1-(imidazol-4-yl)glycerol 3-phosphate = 3-(imidazol-4-yl)-2-oxopropyl phosphate + H2O. It participates in amino-acid biosynthesis; L-histidine biosynthesis; L-histidine from 5-phospho-alpha-D-ribose 1-diphosphate: step 6/9. The polypeptide is Imidazoleglycerol-phosphate dehydratase (Listeria innocua serovar 6a (strain ATCC BAA-680 / CLIP 11262)).